A 321-amino-acid polypeptide reads, in one-letter code: Lipoyl synthase (321 aa).

[4Fe-4S] cluster is bound by residues Cys68, Cys73, Cys79, Cys94, Cys98, Cys101, and Ser308. Positions 80-297 (FNHGTATFMI…KAEALAMGFT (218 aa)) constitute a Radical SAM core domain.

Belongs to the radical SAM superfamily. Lipoyl synthase family. Requires [4Fe-4S] cluster as cofactor.

Its subcellular location is the cytoplasm. It catalyses the reaction [[Fe-S] cluster scaffold protein carrying a second [4Fe-4S](2+) cluster] + N(6)-octanoyl-L-lysyl-[protein] + 2 oxidized [2Fe-2S]-[ferredoxin] + 2 S-adenosyl-L-methionine + 4 H(+) = [[Fe-S] cluster scaffold protein] + N(6)-[(R)-dihydrolipoyl]-L-lysyl-[protein] + 4 Fe(3+) + 2 hydrogen sulfide + 2 5'-deoxyadenosine + 2 L-methionine + 2 reduced [2Fe-2S]-[ferredoxin]. The protein operates within protein modification; protein lipoylation via endogenous pathway; protein N(6)-(lipoyl)lysine from octanoyl-[acyl-carrier-protein]: step 2/2. Its function is as follows. Catalyzes the radical-mediated insertion of two sulfur atoms into the C-6 and C-8 positions of the octanoyl moiety bound to the lipoyl domains of lipoate-dependent enzymes, thereby converting the octanoylated domains into lipoylated derivatives. In Salmonella typhi, this protein is Lipoyl synthase.